Reading from the N-terminus, the 199-residue chain is Chaperone protein TorD (199 aa).

The protein belongs to the TorD/DmsD family. TorD subfamily.

It is found in the cytoplasm. Functionally, involved in the biogenesis of TorA. Acts on TorA before the insertion of the molybdenum cofactor and, as a result, probably favors a conformation of the apoenzyme that is competent for acquiring the cofactor. This Escherichia coli O157:H7 (strain EC4115 / EHEC) protein is Chaperone protein TorD.